The chain runs to 92 residues: Small ribosomal subunit protein uS19 (92 aa).

It belongs to the universal ribosomal protein uS19 family.

Protein S19 forms a complex with S13 that binds strongly to the 16S ribosomal RNA. This chain is Small ribosomal subunit protein uS19, found in Rhodopseudomonas palustris (strain BisB5).